The sequence spans 202 residues: FMN-dependent NADH:quinone oxidoreductase (202 aa).

Residues serine 10, 16–18 (SAS), and 96–99 (MWNF) each bind FMN.

This sequence belongs to the azoreductase type 1 family. In terms of assembly, homodimer. FMN is required as a cofactor.

The catalysed reaction is 2 a quinone + NADH + H(+) = 2 a 1,4-benzosemiquinone + NAD(+). It carries out the reaction N,N-dimethyl-1,4-phenylenediamine + anthranilate + 2 NAD(+) = 2-(4-dimethylaminophenyl)diazenylbenzoate + 2 NADH + 2 H(+). Quinone reductase that provides resistance to thiol-specific stress caused by electrophilic quinones. Its function is as follows. Also exhibits azoreductase activity. Catalyzes the reductive cleavage of the azo bond in aromatic azo compounds to the corresponding amines. The protein is FMN-dependent NADH:quinone oxidoreductase of Beijerinckia indica subsp. indica (strain ATCC 9039 / DSM 1715 / NCIMB 8712).